The primary structure comprises 947 residues: Bifunctional glutamine synthetase adenylyltransferase/adenylyl-removing enzyme (947 aa).

The segment at 1–440 is adenylyl removase; that stretch reads MTPLSSPLSQ…VFNELIGDDE (440 aa). The interval 450–947 is adenylyl transferase; the sequence is SEPWREVWQD…ASWRKWLVAV (498 aa).

The protein belongs to the GlnE family. Requires Mg(2+) as cofactor.

It catalyses the reaction [glutamine synthetase]-O(4)-(5'-adenylyl)-L-tyrosine + phosphate = [glutamine synthetase]-L-tyrosine + ADP. It carries out the reaction [glutamine synthetase]-L-tyrosine + ATP = [glutamine synthetase]-O(4)-(5'-adenylyl)-L-tyrosine + diphosphate. Functionally, involved in the regulation of glutamine synthetase GlnA, a key enzyme in the process to assimilate ammonia. When cellular nitrogen levels are high, the C-terminal adenylyl transferase (AT) inactivates GlnA by covalent transfer of an adenylyl group from ATP to specific tyrosine residue of GlnA, thus reducing its activity. Conversely, when nitrogen levels are low, the N-terminal adenylyl removase (AR) activates GlnA by removing the adenylyl group by phosphorolysis, increasing its activity. The regulatory region of GlnE binds the signal transduction protein PII (GlnB) which indicates the nitrogen status of the cell. This Salmonella paratyphi C (strain RKS4594) protein is Bifunctional glutamine synthetase adenylyltransferase/adenylyl-removing enzyme.